The sequence spans 187 residues: Protein TIFY 3B (187 aa).

Positions 1 to 10 (MTKVKDEPRA) are enriched in basic and acidic residues. Positions 1 to 50 (MTKVKDEPRASVEGGCGVADGDGGAAEIGGTGSVEKSINEVRSTEIQTAE) are disordered. Over residues 14-32 (GGCGVADGDGGAAEIGGTG) the composition is skewed to gly residues. The 36-residue stretch at 51-86 (PTVPPNQLTIFFGGSVTVFDGLPSEKVQEILRIAAK) folds into the Tify domain. A Jas motif is present at residues 139 to 163 (PIARRHSLQRFLEKRRDRLVNKNPY). The Nuclear localization signal signature appears at 141–148 (ARRHSLQR). The segment at 152-187 (KRRDRLVNKNPYPTSDFKKTDVPTGNVSIKEEFPTA) is disordered.

It belongs to the TIFY/JAZ family. As to quaternary structure, interacts with MYC2, AFPH2/NINJA, TIFY10A/JAZ1, TIFY10B/JAZ2, TIFY11A/JAZ5, TIFY11B/JAZ6, TIFY5A/JAZ8 and TIFY9/JAZ10. In terms of assembly, (Microbial infection) Interacts with the pathogenic Pseudomonas syringae HopZ1a protein. (Microbial infection) Acetylated by Pseudomonas syringae HopZ1a. In terms of processing, ubiquitinated. Targeted for degradation by the SCF(COI1) E3 ubiquitin ligase-proteasome pathway during jasmonate signaling.

It localises to the nucleus. Its function is as follows. Repressor of jasmonate responses. This chain is Protein TIFY 3B, found in Arabidopsis thaliana (Mouse-ear cress).